We begin with the raw amino-acid sequence, 325 residues long: Ribosomal RNA small subunit methyltransferase H (325 aa).

A disordered region spans residues Met-1 to His-28. Residues Glu-15–Ala-24 are compositionally biased toward low complexity. S-adenosyl-L-methionine contacts are provided by residues Gly-56 to His-58, Asp-82, Tyr-110, Asp-131, and Gln-138. Residues Thr-303–Glu-325 are disordered. Basic residues predominate over residues Arg-314–Glu-325.

It belongs to the methyltransferase superfamily. RsmH family.

The protein resides in the cytoplasm. The catalysed reaction is cytidine(1402) in 16S rRNA + S-adenosyl-L-methionine = N(4)-methylcytidine(1402) in 16S rRNA + S-adenosyl-L-homocysteine + H(+). Its function is as follows. Specifically methylates the N4 position of cytidine in position 1402 (C1402) of 16S rRNA. This chain is Ribosomal RNA small subunit methyltransferase H, found in Rhodopirellula baltica (strain DSM 10527 / NCIMB 13988 / SH1).